The sequence spans 172 residues: Small ribosomal subunit protein uS5 (172 aa).

Positions 17–80 (MREKMIAVNR…EEARRKMIKV (64 aa)) constitute an S5 DRBM domain.

This sequence belongs to the universal ribosomal protein uS5 family. Part of the 30S ribosomal subunit. Contacts proteins S4 and S8.

Its function is as follows. With S4 and S12 plays an important role in translational accuracy. Located at the back of the 30S subunit body where it stabilizes the conformation of the head with respect to the body. This Janthinobacterium sp. (strain Marseille) (Minibacterium massiliensis) protein is Small ribosomal subunit protein uS5.